A 153-amino-acid polypeptide reads, in one-letter code: Pro-corazonin (153 aa).

Positions Met1–Gly20 are cleaved as a signal peptide. Position 21 is a pyrrolidone carboxylic acid (Gln21). The residue at position 31 (Asn31) is an Asparagine amide. The propeptide occupies Leu64–His153.

This sequence belongs to the corazonin family. In terms of tissue distribution, expression is restricted to 24 neurons in the larval CNS (8 in the brain and 16 in the ventral nerve cord) and 12-16 neurons in the pars lateralis of the adult brain.

The protein resides in the secreted. Functionally, cardioactive peptide. Corazonin is probably involved in the physiological regulation of the heart beat. Clock (Clk) and cycle (cyc) proteins negatively regulate Crz transcription in a cell-specific manner. This chain is Pro-corazonin (Crz), found in Drosophila virilis (Fruit fly).